The chain runs to 510 residues: NAD(P)H-quinone oxidoreductase subunit 2, chloroplastic (510 aa).

11 consecutive transmembrane segments (helical) span residues 24–44 (LLLF…GLIL), 59–79 (WFYF…LFRW), 99–119 (IFQF…VEYI), 124–144 (MAIT…MFLC), 149–169 (LITI…LSGY), 183–203 (YLLM…WLYG), 295–315 (WHLL…LIAI), 323–343 (MLAY…IVGD), 347–367 (GYAS…GTFA), 395–415 (ALSS…AGFF), and 418–438 (LHLF…IGLL).

The protein belongs to the complex I subunit 2 family. In terms of assembly, NDH is composed of at least 16 different subunits, 5 of which are encoded in the nucleus.

It localises to the plastid. It is found in the chloroplast thylakoid membrane. It carries out the reaction a plastoquinone + NADH + (n+1) H(+)(in) = a plastoquinol + NAD(+) + n H(+)(out). The catalysed reaction is a plastoquinone + NADPH + (n+1) H(+)(in) = a plastoquinol + NADP(+) + n H(+)(out). In terms of biological role, NDH shuttles electrons from NAD(P)H:plastoquinone, via FMN and iron-sulfur (Fe-S) centers, to quinones in the photosynthetic chain and possibly in a chloroplast respiratory chain. The immediate electron acceptor for the enzyme in this species is believed to be plastoquinone. Couples the redox reaction to proton translocation, and thus conserves the redox energy in a proton gradient. The chain is NAD(P)H-quinone oxidoreductase subunit 2, chloroplastic from Maianthemum racemosum (False Solomon's-seal).